The primary structure comprises 572 residues: 2-succinyl-5-enolpyruvyl-6-hydroxy-3-cyclohexene-1-carboxylate synthase (572 aa).

This sequence belongs to the TPP enzyme family. MenD subfamily. As to quaternary structure, homodimer. Requires Mg(2+) as cofactor. The cofactor is Mn(2+). Thiamine diphosphate serves as cofactor.

The catalysed reaction is isochorismate + 2-oxoglutarate + H(+) = 5-enolpyruvoyl-6-hydroxy-2-succinyl-cyclohex-3-ene-1-carboxylate + CO2. Its pathway is quinol/quinone metabolism; 1,4-dihydroxy-2-naphthoate biosynthesis; 1,4-dihydroxy-2-naphthoate from chorismate: step 2/7. It participates in quinol/quinone metabolism; menaquinone biosynthesis. Catalyzes the thiamine diphosphate-dependent decarboxylation of 2-oxoglutarate and the subsequent addition of the resulting succinic semialdehyde-thiamine pyrophosphate anion to isochorismate to yield 2-succinyl-5-enolpyruvyl-6-hydroxy-3-cyclohexene-1-carboxylate (SEPHCHC). This is 2-succinyl-5-enolpyruvyl-6-hydroxy-3-cyclohexene-1-carboxylate synthase from Vibrio campbellii (strain ATCC BAA-1116).